Here is a 440-residue protein sequence, read N- to C-terminus: Proline--tRNA ligase (440 aa).

It belongs to the class-II aminoacyl-tRNA synthetase family. ProS type 2 subfamily. In terms of assembly, homodimer.

Its subcellular location is the cytoplasm. The catalysed reaction is tRNA(Pro) + L-proline + ATP = L-prolyl-tRNA(Pro) + AMP + diphosphate. In terms of biological role, catalyzes the attachment of proline to tRNA(Pro) in a two-step reaction: proline is first activated by ATP to form Pro-AMP and then transferred to the acceptor end of tRNA(Pro). In Rhizobium johnstonii (strain DSM 114642 / LMG 32736 / 3841) (Rhizobium leguminosarum bv. viciae), this protein is Proline--tRNA ligase.